A 248-amino-acid polypeptide reads, in one-letter code: Sugar fermentation stimulation protein homolog (248 aa).

The protein belongs to the SfsA family.

The chain is Sugar fermentation stimulation protein homolog from Methylorubrum extorquens (strain CM4 / NCIMB 13688) (Methylobacterium extorquens).